Reading from the N-terminus, the 433-residue chain is Homeobox protein Hox-D3 (433 aa).

Disordered stretches follow at residues 44–198, 258–280, and 401–433; these read STPH…SKRV, GILHSPAGQSPERSPPLGGAAGH, and HHGPCDPHPTYTDLSAHHSSQGRLPEAPKLTHL. Positions 58-74 are enriched in polar residues; the sequence is SLDSDYPSSACSIQSSA. The segment covering 97–106 has biased composition (gly residues); the sequence is NSQGGGGGNQ. The span at 116–132 shows a compositional bias: pro residues; the sequence is PPQPPPPPPPTLPPSSP. Residues 146–159 show a composition bias toward low complexity; it reads GGLSASSSSSTISK. The Antp-type hexapeptide motif lies at 161-166; that stretch reads IFPWMK. The span at 171 to 183 shows a compositional bias: polar residues; that stretch reads NSKQKNSCATSGE. The homeobox DNA-binding region spans 195–254; sequence SKRVRTAYTSAQLVELEKEFHFNRYLCRPRRVEMANLLNLTERQIKIWFQNRRMKYKKDQ.

The protein belongs to the Antp homeobox family. In terms of tissue distribution, detected in adult kidney, but not in other adult tissues tested.

Its subcellular location is the nucleus. Functionally, sequence-specific transcription factor which is part of a developmental regulatory system that provides cells with specific positional identities on the anterior-posterior axis. The polypeptide is Homeobox protein Hox-D3 (Hoxd3) (Mus musculus (Mouse)).